We begin with the raw amino-acid sequence, 202 residues long: Small ribosomal subunit protein uS4c (202 aa).

An S4 RNA-binding domain is found at 90 to 153; it reads MRLDNVIFRL…KSETIISKNI (64 aa).

Belongs to the universal ribosomal protein uS4 family. As to quaternary structure, part of the 30S ribosomal subunit. Contacts protein S5. The interaction surface between S4 and S5 is involved in control of translational fidelity.

It localises to the plastid. Its subcellular location is the chloroplast. In terms of biological role, one of the primary rRNA binding proteins, it binds directly to 16S rRNA where it nucleates assembly of the body of the 30S subunit. With S5 and S12 plays an important role in translational accuracy. The sequence is that of Small ribosomal subunit protein uS4c (rps4) from Hylocomium splendens (Glittering wood-moss).